The sequence spans 159 residues: Phosphopantetheine adenylyltransferase (159 aa).

Position 10 (Ser-10) interacts with substrate. Residues Ser-10–Phe-11 and His-18 contribute to the ATP site. Residues Lys-42, Leu-77, and Lys-91 each coordinate substrate. ATP-binding positions include Gly-92–Arg-94, Glu-102, and Asn-126–Ser-132.

It belongs to the bacterial CoaD family. Homohexamer. The cofactor is Mg(2+).

The protein resides in the cytoplasm. It carries out the reaction (R)-4'-phosphopantetheine + ATP + H(+) = 3'-dephospho-CoA + diphosphate. The protein operates within cofactor biosynthesis; coenzyme A biosynthesis; CoA from (R)-pantothenate: step 4/5. In terms of biological role, reversibly transfers an adenylyl group from ATP to 4'-phosphopantetheine, yielding dephospho-CoA (dPCoA) and pyrophosphate. This is Phosphopantetheine adenylyltransferase from Leifsonia xyli subsp. xyli (strain CTCB07).